Consider the following 117-residue polypeptide: MTRVKRGNVARKRRKKILKLAKGFRGSHSKLFRTANQQVMKALRNAYRDRRKRKRDFRRLWITRINAAARQEGMSYSKLTGQLKKANIEINRKMLAQLAVLDPAAFSEVVKVAATAK.

Belongs to the bacterial ribosomal protein bL20 family.

Functionally, binds directly to 23S ribosomal RNA and is necessary for the in vitro assembly process of the 50S ribosomal subunit. It is not involved in the protein synthesizing functions of that subunit. The protein is Large ribosomal subunit protein bL20 (rplT) of Synechocystis sp. (strain ATCC 27184 / PCC 6803 / Kazusa).